Reading from the N-terminus, the 885-residue chain is DDT domain-containing protein DDB_G0282237 (885 aa).

Residues 20 to 125 enclose the WAC domain; that stretch reads EEYFVIKFTK…GEIVSFKKAN (106 aa). Disordered stretches follow at residues 141–184, 201–264, and 367–431; these read ESDE…INAL, DDEN…SVRK, and LEDT…KENE. A compositionally biased stretch (low complexity) spans 154–180; it reads SSSSSSTTTTTTTPTTPPTTTTTTSSS. Residues 210-264 are compositionally biased toward basic and acidic residues; sequence KNNGDTSSDKKGEKEKEKEKEKEKEKEKEKEKEKEKEKEKEKEKEKDSDTKSVRK. The stretch at 217-260 forms a coiled coil; the sequence is SDKKGEKEKEKEKEKEKEKEKEKEKEKEKEKEKEKEKEKDSDTK. The span at 367-379 shows a compositional bias: acidic residues; the sequence is LEDTEEESVDIES. Over residues 380–396 the composition is skewed to low complexity; that stretch reads NDNSNSNGNSNSNNNLD. The 61-residue stretch at 443-503 folds into the DDT domain; the sequence is SNTFGDFLMV…MKTIFTLPSY (61 aa). Residues 530–565 are a coiled coil; the sequence is FQNEVKRIAIEEKEKQEKLKQLEEQNIRMLNLANEL. Disordered stretches follow at residues 562 to 632 and 707 to 744; these read ANEL…WKEE and KQDD…QKKP. The span at 567–577 shows a compositional bias: acidic residues; it reads GSDDEDDEMKL. Residues 578-603 are compositionally biased toward basic and acidic residues; the sequence is DEDGNEIKKDVEMKDNDGTKDTKKDD. Coiled-coil stretches lie at residues 593-628 and 674-782; these read NDGT…GEEE and ASEK…RDRN. Composition is skewed to acidic residues over residues 604-631 and 715-729; these read EENE…EWKE and AEDD…EEQQ.

It localises to the nucleus. The protein is DDT domain-containing protein DDB_G0282237 of Dictyostelium discoideum (Social amoeba).